The sequence spans 85 residues: Alpha-defensin 14 (85 aa).

The N-terminal stretch at 1-11 (ALVLLAFQVQA) is a signal peptide. Positions 12 to 50 (DPIQNTDEETKTEEQPGEDDQAVSVSFGDPEGSSLQEES) are excised as a propeptide. Positions 13–48 (PIQNTDEETKTEEQPGEDDQAVSVSFGDPEGSSLQE) are disordered. Cystine bridges form between Cys56/Cys84, Cys58/Cys73, and Cys63/Cys83.

It belongs to the alpha-defensin family. Paneth cells of the small bowel.

It is found in the secreted. In terms of biological role, probably contributes to the antimicrobial barrier function of the small bowel mucosa. The sequence is that of Alpha-defensin 14 (Defa14) from Mus musculus (Mouse).